A 100-amino-acid chain; its full sequence is NADH-quinone oxidoreductase subunit K (100 aa).

3 helical membrane passes run 4–24, 28–48, and 60–80; these read LQHGLILAAILFALGLTGLLI, LLFMLISLEIMINAAALAFVV, and VMYILAISLAAAEASIGLALL.

Belongs to the complex I subunit 4L family. NDH-1 is composed of 13 different subunits. Subunits NuoA, H, J, K, L, M, N constitute the membrane sector of the complex.

The protein resides in the cell inner membrane. It catalyses the reaction a quinone + NADH + 5 H(+)(in) = a quinol + NAD(+) + 4 H(+)(out). Its function is as follows. NDH-1 shuttles electrons from NADH, via FMN and iron-sulfur (Fe-S) centers, to quinones in the respiratory chain. The immediate electron acceptor for the enzyme in this species is believed to be ubiquinone. Couples the redox reaction to proton translocation (for every two electrons transferred, four hydrogen ions are translocated across the cytoplasmic membrane), and thus conserves the redox energy in a proton gradient. This is NADH-quinone oxidoreductase subunit K from Edwardsiella ictaluri (strain 93-146).